A 125-amino-acid polypeptide reads, in one-letter code: SOSS complex subunit C homolog (125 aa).

Positions 43-77 are disordered; sequence MPSPQLLGQPTVAPEFLPQGVGLPTNATPPRSAFN. Polar residues predominate over residues 67-77; it reads TNATPPRSAFN.

This sequence belongs to the SOSS-C family.

The sequence is that of SOSS complex subunit C homolog from Drosophila persimilis (Fruit fly).